Reading from the N-terminus, the 331-residue chain is Adenosine deaminase (331 aa).

Residues histidine 12 and histidine 14 each coordinate Zn(2+). Substrate contacts are provided by histidine 14, aspartate 16, and glycine 170. Histidine 197 provides a ligand contact to Zn(2+). Glutamate 200 acts as the Proton donor in catalysis. Aspartate 278 serves as a coordination point for Zn(2+). Aspartate 279 contacts substrate.

This sequence belongs to the metallo-dependent hydrolases superfamily. Adenosine and AMP deaminases family. Adenosine deaminase subfamily. Zn(2+) serves as cofactor.

It carries out the reaction adenosine + H2O + H(+) = inosine + NH4(+). It catalyses the reaction 2'-deoxyadenosine + H2O + H(+) = 2'-deoxyinosine + NH4(+). Catalyzes the hydrolytic deamination of adenosine and 2-deoxyadenosine. This chain is Adenosine deaminase, found in Shewanella oneidensis (strain ATCC 700550 / JCM 31522 / CIP 106686 / LMG 19005 / NCIMB 14063 / MR-1).